The following is a 223-amino-acid chain: uncharacterized protein (223 aa).

5 helical membrane passes run 28-48, 59-79, 88-108, 128-148, and 176-196; these read LSNT…GLIT, LIVQ…ITLA, AFNQ…MFFI, IVGL…VWLS, and AWAI…YMIV.

The protein resides in the cell membrane. This is an uncharacterized protein from Mycoplasma pneumoniae (strain ATCC 29342 / M129 / Subtype 1) (Mycoplasmoides pneumoniae).